The chain runs to 473 residues: Bifunctional protein HldE (473 aa).

The segment at 1 to 318 (MKLTLPRYDQ…RAVQREEGSE (318 aa)) is ribokinase. Residue 194 to 197 (NLHE) coordinates ATP. Residue Asp263 is part of the active site. The tract at residues 343 to 473 (FTNGCFDILH…TAIVEKIRNK (131 aa)) is cytidylyltransferase.

This sequence in the N-terminal section; belongs to the carbohydrate kinase PfkB family. It in the C-terminal section; belongs to the cytidylyltransferase family. In terms of assembly, homodimer.

It catalyses the reaction D-glycero-beta-D-manno-heptose 7-phosphate + ATP = D-glycero-beta-D-manno-heptose 1,7-bisphosphate + ADP + H(+). It carries out the reaction D-glycero-beta-D-manno-heptose 1-phosphate + ATP + H(+) = ADP-D-glycero-beta-D-manno-heptose + diphosphate. It functions in the pathway nucleotide-sugar biosynthesis; ADP-L-glycero-beta-D-manno-heptose biosynthesis; ADP-L-glycero-beta-D-manno-heptose from D-glycero-beta-D-manno-heptose 7-phosphate: step 1/4. It participates in nucleotide-sugar biosynthesis; ADP-L-glycero-beta-D-manno-heptose biosynthesis; ADP-L-glycero-beta-D-manno-heptose from D-glycero-beta-D-manno-heptose 7-phosphate: step 3/4. Catalyzes the phosphorylation of D-glycero-D-manno-heptose 7-phosphate at the C-1 position to selectively form D-glycero-beta-D-manno-heptose-1,7-bisphosphate. Functionally, catalyzes the ADP transfer from ATP to D-glycero-beta-D-manno-heptose 1-phosphate, yielding ADP-D-glycero-beta-D-manno-heptose. The sequence is that of Bifunctional protein HldE from Ectopseudomonas mendocina (strain ymp) (Pseudomonas mendocina).